Reading from the N-terminus, the 548-residue chain is Folylpolyglutamate synthase (548 aa).

130–133 (GKGS) contributes to the ATP binding site. 3 residues coordinate Mg(2+): S157, E234, and H262. R382 and D396 together coordinate ATP.

It belongs to the folylpolyglutamate synthase family. The cofactor is a monovalent cation.

Its subcellular location is the mitochondrion inner membrane. The protein localises to the mitochondrion matrix. It localises to the cytoplasm. The enzyme catalyses (6S)-5,6,7,8-tetrahydrofolyl-(gamma-L-Glu)(n) + L-glutamate + ATP = (6S)-5,6,7,8-tetrahydrofolyl-(gamma-L-Glu)(n+1) + ADP + phosphate + H(+). It functions in the pathway cofactor biosynthesis; tetrahydrofolylpolyglutamate biosynthesis. In terms of biological role, catalyzes conversion of folates to polyglutamate derivatives allowing concentration of folate compounds in the cell and the intracellular retention of these cofactors, which are important substrates for most of the folate-dependent enzymes that are involved in one-carbon transfer reactions involved in purine, pyrimidine and amino acid synthesis. Required for methionine synthesis and maintenance of intact mitochondrial DNA. Involved in telomere maintenance. This is Folylpolyglutamate synthase from Saccharomyces cerevisiae (strain FostersO) (Baker's yeast).